A 99-amino-acid chain; its full sequence is Translation initiation factor 1A (99 aa).

Residues 11–84 form the S1-like domain; it reads RRVRTPRRGE…EKADIVWRYT (74 aa).

It belongs to the eIF-1A family.

Functionally, seems to be required for maximal rate of protein biosynthesis. Enhances ribosome dissociation into subunits and stabilizes the binding of the initiator Met-tRNA(I) to 40 S ribosomal subunits. This is Translation initiation factor 1A (eIF1A) from Methanothermobacter thermautotrophicus (strain ATCC 29096 / DSM 1053 / JCM 10044 / NBRC 100330 / Delta H) (Methanobacterium thermoautotrophicum).